Consider the following 458-residue polypeptide: MSTGKTVQIIGAVVDVEFPRESIPKVYHALRIDDVGLTLEVQQQLGDGVVRTIAMGGSDGLRRGMAVTNTGAPISVPVGTKTLGRIMDVLGEPVDEAGPVGEEERWSIHRKAPAYEELSPATELLETGIKVIDLICPFAKGGKVGLFGGAGVGKTVNMMELIRNIATEHSGYSVFAGVGERTREGNDFYHEMKDSQVLDKVSLVYGQMNEPPGNRLRVALTGLTMAEFFREEGRDVLLFVDNIYRYTLAGTEVSALLGRMPSAVGYQPTLAEEMGVLQERITSTKTGSITSIQAVYVPADDLTDPSPATTFAHLDATVVLSRQIAELGIYPAVDPLDSTSRQLDPLIVGQEHYQVARAVQGNLQRYKELKDIIAILGMDELSEEDKLTVSRARKIQRFLSQPFFVAEVFTGSPGKYVPLKETIQSFKGIVEGEYDHLPEQAFYMVGTIDEAVEKAKKL.

Glycine 148–threonine 155 contacts ATP.

The protein belongs to the ATPase alpha/beta chains family. In terms of assembly, F-type ATPases have 2 components, CF(1) - the catalytic core - and CF(0) - the membrane proton channel. CF(1) has five subunits: alpha(3), beta(3), gamma(1), delta(1), epsilon(1). CF(0) has three main subunits: a(1), b(2) and c(9-12). The alpha and beta chains form an alternating ring which encloses part of the gamma chain. CF(1) is attached to CF(0) by a central stalk formed by the gamma and epsilon chains, while a peripheral stalk is formed by the delta and b chains.

It is found in the cell inner membrane. The enzyme catalyses ATP + H2O + 4 H(+)(in) = ADP + phosphate + 5 H(+)(out). Functionally, produces ATP from ADP in the presence of a proton gradient across the membrane. The catalytic sites are hosted primarily by the beta subunits. The chain is ATP synthase subunit beta from Nitrosococcus oceani (strain ATCC 19707 / BCRC 17464 / JCM 30415 / NCIMB 11848 / C-107).